We begin with the raw amino-acid sequence, 603 residues long: NADH-ubiquinone oxidoreductase chain 5 (603 aa).

15 consecutive transmembrane segments (helical) span residues 38-58 (SIVA…MCLD), 87-107 (MMFI…SLWY), 122-142 (LIFL…QLFI), 144-160 (WEGV…WWYA), 171-191 (AILY…WFIL), 211-233 (TPLL…HPWL), 241-261 (TPVS…FLLI), 272-292 (LIQT…AVCA), 301-320 (IVAF…IGIN), 325-347 (AFLH…GSII), 370-390 (STSL…TGFY), 407-429 (WALS…MILL), 458-478 (AAGS…ASPF), 482-502 (IPLY…LTAL), and 582-602 (GMIK…LLLI).

This sequence belongs to the complex I subunit 5 family. As to quaternary structure, core subunit of respiratory chain NADH dehydrogenase (Complex I) which is composed of 45 different subunits.

It localises to the mitochondrion inner membrane. It catalyses the reaction a ubiquinone + NADH + 5 H(+)(in) = a ubiquinol + NAD(+) + 4 H(+)(out). Its function is as follows. Core subunit of the mitochondrial membrane respiratory chain NADH dehydrogenase (Complex I) which catalyzes electron transfer from NADH through the respiratory chain, using ubiquinone as an electron acceptor. Essential for the catalytic activity and assembly of complex I. The protein is NADH-ubiquinone oxidoreductase chain 5 (MT-ND5) of Homo sapiens (Human).